The following is a 201-amino-acid chain: Riboflavin synthase (201 aa).

Lumazine-binding repeat units lie at residues 1–97 and 98–197; these read MFTG…LGGH and IVQG…ERLM. Residues 4-6, 47-49, 62-67, 101-103, lysine 136, 145-147, and 162-167 contribute to the 2,4-dihydroxypteridine site; these read GIV, CLT, DVMAET, GHV, SLT, and SLIPTT.

Homotrimer.

It catalyses the reaction 2 6,7-dimethyl-8-(1-D-ribityl)lumazine + H(+) = 5-amino-6-(D-ribitylamino)uracil + riboflavin. It functions in the pathway cofactor biosynthesis; riboflavin biosynthesis; riboflavin from 2-hydroxy-3-oxobutyl phosphate and 5-amino-6-(D-ribitylamino)uracil: step 2/2. Catalyzes the dismutation of two molecules of 6,7-dimethyl-8-ribityllumazine, resulting in the formation of riboflavin and 5-amino-6-(D-ribitylamino)uracil. The protein is Riboflavin synthase (ribE) of Mycobacterium bovis (strain ATCC BAA-935 / AF2122/97).